The chain runs to 647 residues: C2H2 finger domain transcription factor USV101 (647 aa).

The segment covering 1–10 (MSFVAPDDRA) has biased composition (basic and acidic residues). The segment at 1-132 (MSFVAPDDRA…ATGYTPDGQP (132 aa)) is disordered. 2 stretches are compositionally biased toward polar residues: residues 27-54 (ESTS…SPNQ) and 66-84 (SSHS…STAY). The span at 97–122 (PTQQQQQQQSEQHIPSPPSSSNRPPS) shows a compositional bias: low complexity. C2H2-type zinc fingers lie at residues 144–169 (FRCR…VRKH) and 175–197 (FPCH…ATVH). A disordered region spans residues 220–647 (QRASREQRRR…VKQQDDKKTQ (428 aa)). Residues 222 to 248 (ASREQRRRGEVVEVPKGAVERRRETRK) are compositionally biased toward basic and acidic residues. Low complexity predominate over residues 249 to 259 (AQAAAAQAAAA). A compositionally biased stretch (polar residues) spans 261–278 (GHSQQNSPYAQYHESQWN). Composition is skewed to low complexity over residues 312-327 (SSSA…YDSA), 404-414 (HGAYPPHDAAA), and 421-434 (GYYH…GSYP). A compositionally biased stretch (basic and acidic residues) spans 504–515 (RAEDDFGKDDRK). The span at 521-540 (SPSNSQVPDSSTAAHANGAH) shows a compositional bias: low complexity. The span at 628-647 (VDKEREKKEEVKQQDDKKTQ) shows a compositional bias: basic and acidic residues.

Its subcellular location is the nucleus. The protein resides in the cytoplasm. In terms of biological role, transcription factor that promotes pheromone gene expression, which results in a subsequent increase in cell fusion. Also promotes production of melanin and capsule and thereby is required for full virulence. The sequence is that of C2H2 finger domain transcription factor USV101 from Cryptococcus neoformans var. grubii serotype A (strain H99 / ATCC 208821 / CBS 10515 / FGSC 9487) (Filobasidiella neoformans var. grubii).